The following is a 350-amino-acid chain: LHKSIPRVETRYFITIYEEEELKNDVLLRFAKLDFNLLQMLHKQELTEVSMWWKDLDFVTTLPYARDRAVECYFWTVGVYAEPQYSEARVMLAKTIAMISIVDDTFDAYGIVKELEVYTDAIQRWDINQIDRLPDYMKISYKVLLDLYKDYETELSKDGRSEVVHYAKERMKEIVRNYFVEAKWFIEGYMPPVSEYLNNRLATSTYYLLTTTSYLGMKCANKEDFEWLTKNPKILEANVTLCRVIDDIATYEVEKGRGQIATGIECYMRDYGVSTEEAMEKFQEMAEIAWKDVNEGILRPTPVSAKILTRILNLARIIDVTYLHNQDGYTHPEKVLKPHIIALVVDSIEI.

5 residues coordinate Mg(2+): D103, D107, D246, T250, and E254. The DDXXD motif motif lies at 103–107; sequence DDTFD.

The protein belongs to the terpene synthase family. Tpsa subfamily. Requires Mg(2+) as cofactor.

It localises to the cytoplasm. It catalyses the reaction (2E,6E)-farnesyl diphosphate = (-)-vetispiradiene + diphosphate. The protein operates within secondary metabolite biosynthesis; terpenoid biosynthesis. Sesquiterpene synthase that catalyzes the formation of vetispiradiene from trans,trans-farnesyl diphosphate. The initial internal cyclization produces the monocyclic intermediate germacrene A. The sequence is that of Vetispiradiene synthase 3 from Hyoscyamus muticus (Egyptian henbane).